We begin with the raw amino-acid sequence, 158 residues long: MNKKKNAPVRKIIADNRKARFNFEILNNLEAGLVLQGAEVKSLRSNHANIAESYASFENGELWLVNSYIPEYTQANRFNHEPRRLRKLLLSKREMARFFNATSREGMTLVPLKLYFNERGRVKLEIALARGKKLHDKRETEKKRDWGREKARLLKRYG.

This sequence belongs to the SmpB family.

It is found in the cytoplasm. Functionally, required for rescue of stalled ribosomes mediated by trans-translation. Binds to transfer-messenger RNA (tmRNA), required for stable association of tmRNA with ribosomes. tmRNA and SmpB together mimic tRNA shape, replacing the anticodon stem-loop with SmpB. tmRNA is encoded by the ssrA gene; the 2 termini fold to resemble tRNA(Ala) and it encodes a 'tag peptide', a short internal open reading frame. During trans-translation Ala-aminoacylated tmRNA acts like a tRNA, entering the A-site of stalled ribosomes, displacing the stalled mRNA. The ribosome then switches to translate the ORF on the tmRNA; the nascent peptide is terminated with the 'tag peptide' encoded by the tmRNA and targeted for degradation. The ribosome is freed to recommence translation, which seems to be the essential function of trans-translation. This is SsrA-binding protein from Bartonella tribocorum (strain CIP 105476 / IBS 506).